A 319-amino-acid polypeptide reads, in one-letter code: MQNRNTYEWAKKMTRLISVLVMIHIITRTSISNAYPIFAQQGYENPREATGRIVCANCHLAKKPVDIEVPQSVLPNTVFEAVVKIPYDMQMKQVLANGKKGALNVGAVLILPEGFELAPPDRISPEIRQKTGNLYFQNYRPNKKNIIVIGPVPGQKYSELVFPILSPDPSTDKEAHFLKYPIYVGGNRGRGQIYPDGSKSNNTVYSASATGRVSKILRKEKGGYEITIDNTSDGGQVVDIVPPGPELLISEGELIKVDQPLTNNPNLGGFGQGDAEIVLQDPLRVKGLLLFLASVILAQIFLVLKKKQFEKVQLAEMNL.

The signal sequence occupies residues 1-34; the sequence is MQNRNTYEWAKKMTRLISVLVMIHIITRTSISNA. The heme site is built by Y35, C55, C58, and H59. The helical transmembrane segment at 287-304 threads the bilayer; that stretch reads GLLLFLASVILAQIFLVL.

It belongs to the cytochrome f family. In terms of assembly, the 4 large subunits of the cytochrome b6-f complex are cytochrome b6, subunit IV (17 kDa polypeptide, petD), cytochrome f and the Rieske protein, while the 4 small subunits are PetG, PetL, PetM and PetN. The complex functions as a dimer. The cofactor is heme.

Its subcellular location is the plastid. The protein resides in the chloroplast thylakoid membrane. Component of the cytochrome b6-f complex, which mediates electron transfer between photosystem II (PSII) and photosystem I (PSI), cyclic electron flow around PSI, and state transitions. In Pinus thunbergii (Japanese black pine), this protein is Cytochrome f (petA).